The primary structure comprises 382 residues: MSEKFYRATYLNVNLDAILANYQNFNQLHANKTVISVIKANGYGLGSVKIAQHLMRHGATFFAVATLDEAIELRMHGVDAKLLVLGVVPTEDIEKAIQHRVALTVPSKAWLKETIKQIPDDNQKNLWLHVKLDTGMGRIGMKDIDEYKEVVDLINKRDHLVFEGVFTHFASADEPGSSMNEQYTLFKEMVNQVEKPIYIHCQNSAGSLLMDGQFCNAIRLGISLYGYYPSEYVKDNVKVHLRPSAQLVSETVQVKTLKVGETVSYGRTFIADEEMTIAILPIGYADGYLRSMQGAFVNVNGSQCEVIGRICMDQMIVKVPSHVKTGEKVILMDNHVDSPQSAEAVANKQGTINYEVLCNLSRRLPRIYYYDNNEEVTNELLK.

The Proton acceptor; specific for D-alanine role is filled by K39. Position 39 is an N6-(pyridoxal phosphate)lysine (K39). R138 serves as a coordination point for substrate. Residue Y265 is the Proton acceptor; specific for L-alanine of the active site. M312 contacts substrate.

It belongs to the alanine racemase family. Pyridoxal 5'-phosphate serves as cofactor.

The catalysed reaction is L-alanine = D-alanine. Its pathway is amino-acid biosynthesis; D-alanine biosynthesis; D-alanine from L-alanine: step 1/1. In terms of biological role, catalyzes the interconversion of L-alanine and D-alanine. May also act on other amino acids. The protein is Alanine racemase (alr) of Staphylococcus epidermidis (strain ATCC 35984 / DSM 28319 / BCRC 17069 / CCUG 31568 / BM 3577 / RP62A).